Consider the following 200-residue polypeptide: Peptidyl-tRNA hydrolase (200 aa).

A tRNA-binding site is contributed by Tyr23. His28 acts as the Proton acceptor in catalysis. The tRNA site is built by Phe79, Asn81, and Asn127.

The protein belongs to the PTH family. In terms of assembly, monomer.

The protein resides in the cytoplasm. It catalyses the reaction an N-acyl-L-alpha-aminoacyl-tRNA + H2O = an N-acyl-L-amino acid + a tRNA + H(+). Its function is as follows. Hydrolyzes ribosome-free peptidyl-tRNAs (with 1 or more amino acids incorporated), which drop off the ribosome during protein synthesis, or as a result of ribosome stalling. Catalyzes the release of premature peptidyl moieties from peptidyl-tRNA molecules trapped in stalled 50S ribosomal subunits, and thus maintains levels of free tRNAs and 50S ribosomes. The sequence is that of Peptidyl-tRNA hydrolase from Streptomyces coelicolor (strain ATCC BAA-471 / A3(2) / M145).